The sequence spans 141 residues: Hemoglobin subunit alpha-1/2 (141 aa).

The Globin domain occupies 1 to 141; sequence VLSPADKTNV…VSTVLTSKYR (141 aa). S3 is subject to Phosphoserine. The residue at position 7 (K7) is an N6-succinyllysine. T8 is modified (phosphothreonine). K11 carries the N6-succinyllysine modification. K16 carries the post-translational modification N6-acetyllysine; alternate. Residue K16 is modified to N6-succinyllysine; alternate. Y24 is subject to Phosphotyrosine. S35 bears the Phosphoserine mark. K40 is subject to N6-succinyllysine. A Phosphoserine modification is found at S49. H58 contributes to the O2 binding site. H87 contributes to the heme b binding site. The residue at position 102 (S102) is a Phosphoserine. At T108 the chain carries Phosphothreonine. At S124 the chain carries Phosphoserine. Phosphothreonine occurs at positions 134 and 137. The residue at position 138 (S138) is a Phosphoserine.

It belongs to the globin family. As to quaternary structure, heterotetramer of two alpha chains and two beta chains. Red blood cells.

Involved in oxygen transport from the lung to the various peripheral tissues. The chain is Hemoglobin subunit alpha-1/2 from Mustela putorius (European polecat).